Reading from the N-terminus, the 690-residue chain is Elongation factor G (690 aa).

In terms of domain architecture, tr-type G spans E8 to V282. Residues A17 to T24, D81 to H85, and N135 to D138 each bind GTP.

Belongs to the TRAFAC class translation factor GTPase superfamily. Classic translation factor GTPase family. EF-G/EF-2 subfamily.

The protein localises to the cytoplasm. In terms of biological role, catalyzes the GTP-dependent ribosomal translocation step during translation elongation. During this step, the ribosome changes from the pre-translocational (PRE) to the post-translocational (POST) state as the newly formed A-site-bound peptidyl-tRNA and P-site-bound deacylated tRNA move to the P and E sites, respectively. Catalyzes the coordinated movement of the two tRNA molecules, the mRNA and conformational changes in the ribosome. The sequence is that of Elongation factor G from Parasynechococcus marenigrum (strain WH8102).